The following is a 496-amino-acid chain: MMSKLQIIQSKGQYINGEWIKGNGLILESTNPASGTLLWQGNNATDEEIANACYVAHRALKSWANTSFEERARYTKAFVEQVEKNREQLARLISLETGKPLWESQTEVSSVIGKVNLSIQAYQERTWPKQTETAEANACLRFKPHGIVVVLGAFNFPAHLSNGHIVPALLAGNTVLYKPSEHTPAVAELIIQCWHDSGLPPGVINCLQGNANCGNTLLSQDIQGVYFTGSYATGLRIHQQFCNRPEVILALEMGGNNPLVIDEVKDIDAAVYHTILSTMITAGQRCTCARRIIIPDSQTGDLFLERFAKACKLMRIGSFDSQPEPFIGPVISHVQALKHLHAQKQLIEMGGEIILPMSLLLEYTGLVSPGIIDMTRAKNPPDEEIFAPFAQIYRYNHFDEAIQLANQTRYGLSAGLLSDNKDHYQQFYQNIRAGLINWNRPTTGAASSLPFGGVGCSGNHRPSAYFAADYCAYPVASMEQPLLTTPVQRLPGLVLE.

229–234 is an NAD(+) binding site; it reads GSYATG. Active-site residues include glutamate 252 and cysteine 286.

It belongs to the aldehyde dehydrogenase family. AstD subfamily.

The enzyme catalyses N-succinyl-L-glutamate 5-semialdehyde + NAD(+) + H2O = N-succinyl-L-glutamate + NADH + 2 H(+). It functions in the pathway amino-acid degradation; L-arginine degradation via AST pathway; L-glutamate and succinate from L-arginine: step 4/5. Catalyzes the NAD-dependent reduction of succinylglutamate semialdehyde into succinylglutamate. The sequence is that of N-succinylglutamate 5-semialdehyde dehydrogenase from Legionella pneumophila subsp. pneumophila (strain Philadelphia 1 / ATCC 33152 / DSM 7513).